Consider the following 426-residue polypeptide: Glutamate-1-semialdehyde 2,1-aminomutase (426 aa).

An N6-(pyridoxal phosphate)lysine modification is found at Lys-265.

The protein belongs to the class-III pyridoxal-phosphate-dependent aminotransferase family. HemL subfamily. In terms of assembly, homodimer. It depends on pyridoxal 5'-phosphate as a cofactor.

It localises to the cytoplasm. It catalyses the reaction (S)-4-amino-5-oxopentanoate = 5-aminolevulinate. The protein operates within porphyrin-containing compound metabolism; protoporphyrin-IX biosynthesis; 5-aminolevulinate from L-glutamyl-tRNA(Glu): step 2/2. This chain is Glutamate-1-semialdehyde 2,1-aminomutase, found in Shigella sonnei (strain Ss046).